A 133-amino-acid chain; its full sequence is MARVKRGVVAHAKHKKVLKQAEGFYGRRKNTIRAAKAAVDRSKQYAYRDRKNRKRIFRALWIQRINAAVRAEGLTYGRFIDGLSKAGIEIDRKVLSDIAVHESAAFSALVASAKKALEYLRDTTSNAFEGAVK.

It belongs to the bacterial ribosomal protein bL20 family.

Binds directly to 23S ribosomal RNA and is necessary for the in vitro assembly process of the 50S ribosomal subunit. It is not involved in the protein synthesizing functions of that subunit. This chain is Large ribosomal subunit protein bL20, found in Bartonella quintana (strain Toulouse) (Rochalimaea quintana).